Consider the following 81-residue polypeptide: NADH-ubiquinone oxidoreductase chain 6 (81 aa).

3 helical membrane passes run 1–21, 27–47, and 48–68; these read MTYFVFFLGICFVVGVLGVAS, YGVVGLVLASVAGCGWLLSLG, and VSFVALVLFMVYFGGMLVVFV.

It belongs to the complex I subunit 6 family.

Its subcellular location is the mitochondrion membrane. It catalyses the reaction a ubiquinone + NADH + 5 H(+)(in) = a ubiquinol + NAD(+) + 4 H(+)(out). Core subunit of the mitochondrial membrane respiratory chain NADH dehydrogenase (Complex I) that is believed to belong to the minimal assembly required for catalysis. Complex I functions in the transfer of electrons from NADH to the respiratory chain. The immediate electron acceptor for the enzyme is believed to be ubiquinone. This is NADH-ubiquinone oxidoreductase chain 6 (MT-ND6) from Anas platyrhynchos (Mallard).